A 208-amino-acid chain; its full sequence is LexA repressor (208 aa).

The H-T-H motif DNA-binding region spans arginine 28–lysine 48. Residues serine 125 and lysine 162 each act as for autocatalytic cleavage activity in the active site.

This sequence belongs to the peptidase S24 family. In terms of assembly, homodimer.

The catalysed reaction is Hydrolysis of Ala-|-Gly bond in repressor LexA.. Its function is as follows. Represses a number of genes involved in the response to DNA damage (SOS response), including recA and lexA. In the presence of single-stranded DNA, RecA interacts with LexA causing an autocatalytic cleavage which disrupts the DNA-binding part of LexA, leading to derepression of the SOS regulon and eventually DNA repair. This is LexA repressor from Alteromonas mediterranea (strain DSM 17117 / CIP 110805 / LMG 28347 / Deep ecotype).